The following is a 608-amino-acid chain: Phosphoenolpyruvate carboxykinase [GTP] (608 aa).

Substrate contacts are provided by residues Arg82 and 222 to 224 (YGG). Lys231 and His251 together coordinate Mn(2+). Ser273 contributes to the substrate binding site. 274 to 279 (ACGKTN) serves as a coordination point for GTP. Cys275 is an active-site residue. Asp298 lines the Mn(2+) pocket. 389 to 391 (NSR) contacts substrate. Residues Arg391, Arg422, and 517–520 (FGDN) each bind GTP.

Belongs to the phosphoenolpyruvate carboxykinase [GTP] family. In terms of assembly, monomer. Mn(2+) is required as a cofactor.

It is found in the cytoplasm. It catalyses the reaction oxaloacetate + GTP = phosphoenolpyruvate + GDP + CO2. Its pathway is carbohydrate biosynthesis; gluconeogenesis. Catalyzes the conversion of oxaloacetate (OAA) to phosphoenolpyruvate (PEP), the rate-limiting step in the metabolic pathway that produces glucose from lactate and other precursors derived from the citric acid cycle. This is Phosphoenolpyruvate carboxykinase [GTP] from Paenarthrobacter aurescens (strain TC1).